Reading from the N-terminus, the 154-residue chain is Myoglobin (154 aa).

Residues 2–148 (GLSDGEWQLV…FRKDMASNYK (147 aa)) enclose the Globin domain. Ser4 is subject to Phosphoserine. Residue His65 participates in nitrite binding. His65 lines the O2 pocket. Phosphothreonine is present on Thr68. Heme b is bound at residue His94.

This sequence belongs to the globin family. In terms of assembly, monomeric.

It is found in the cytoplasm. The protein resides in the sarcoplasm. It catalyses the reaction Fe(III)-heme b-[protein] + nitric oxide + H2O = Fe(II)-heme b-[protein] + nitrite + 2 H(+). The catalysed reaction is H2O2 + AH2 = A + 2 H2O. In terms of biological role, monomeric heme protein which primary function is to store oxygen and facilitate its diffusion within muscle tissues. Reversibly binds oxygen through a pentacoordinated heme iron and enables its timely and efficient release as needed during periods of heightened demand. Depending on the oxidative conditions of tissues and cells, and in addition to its ability to bind oxygen, it also has a nitrite reductase activity whereby it regulates the production of bioactive nitric oxide. Under stress conditions, like hypoxia and anoxia, it also protects cells against reactive oxygen species thanks to its pseudoperoxidase activity. The polypeptide is Myoglobin (MB) (Pan troglodytes (Chimpanzee)).